Reading from the N-terminus, the 226-residue chain is Uracil-DNA glycosylase (226 aa).

Residue Asp-64 is the Proton acceptor of the active site.

This sequence belongs to the uracil-DNA glycosylase (UDG) superfamily. UNG family.

It localises to the cytoplasm. It catalyses the reaction Hydrolyzes single-stranded DNA or mismatched double-stranded DNA and polynucleotides, releasing free uracil.. Its function is as follows. Excises uracil residues from the DNA which can arise as a result of misincorporation of dUMP residues by DNA polymerase or due to deamination of cytosine. This chain is Uracil-DNA glycosylase, found in Fusobacterium nucleatum subsp. nucleatum (strain ATCC 25586 / DSM 15643 / BCRC 10681 / CIP 101130 / JCM 8532 / KCTC 2640 / LMG 13131 / VPI 4355).